A 453-amino-acid polypeptide reads, in one-letter code: Ethanolamine ammonia-lyase large subunit (453 aa).

Substrate-binding positions include 160-162 (RLQ) and N193. Adenosylcob(III)alamin-binding residues include P194 and Q246. E287 is a substrate binding site. An adenosylcob(III)alamin-binding site is contributed by S295. D362 contacts substrate. Adenosylcob(III)alamin is bound at residue M401.

The protein belongs to the EutB family. The basic unit is a heterodimer which dimerizes to form tetramers. The heterotetramers trimerize; 6 large subunits form a core ring with 6 small subunits projecting outwards. Requires adenosylcob(III)alamin as cofactor.

It is found in the bacterial microcompartment. The enzyme catalyses ethanolamine = acetaldehyde + NH4(+). It participates in amine and polyamine degradation; ethanolamine degradation. Functionally, catalyzes the deamination of various vicinal amino-alcohols to oxo compounds. Allows this organism to utilize ethanolamine as the sole source of nitrogen and carbon in the presence of vitamin B12. The sequence is that of Ethanolamine ammonia-lyase large subunit from Escherichia coli O157:H7.